We begin with the raw amino-acid sequence, 164 residues long: Phosphopantetheine adenylyltransferase (164 aa).

Ser9 is a substrate binding site. ATP is bound by residues 9-10 (SF) and His17. Residues Lys41, Leu73, and Lys87 each coordinate substrate. ATP-binding positions include 88–90 (GLR), Glu98, and 123–129 (YSYLSSS).

Belongs to the bacterial CoaD family. In terms of assembly, homohexamer. Mg(2+) is required as a cofactor.

Its subcellular location is the cytoplasm. The enzyme catalyses (R)-4'-phosphopantetheine + ATP + H(+) = 3'-dephospho-CoA + diphosphate. The protein operates within cofactor biosynthesis; coenzyme A biosynthesis; CoA from (R)-pantothenate: step 4/5. In terms of biological role, reversibly transfers an adenylyl group from ATP to 4'-phosphopantetheine, yielding dephospho-CoA (dPCoA) and pyrophosphate. This is Phosphopantetheine adenylyltransferase from Clostridium botulinum (strain Okra / Type B1).